Consider the following 469-residue polypeptide: Trigger factor (469 aa).

The 86-residue stretch at Gly165–Leu250 folds into the PPIase FKBP-type domain. The segment covering Glu439 to Pro460 has biased composition (basic and acidic residues). Residues Glu439–Gly469 are disordered.

Belongs to the FKBP-type PPIase family. Tig subfamily.

Its subcellular location is the cytoplasm. The catalysed reaction is [protein]-peptidylproline (omega=180) = [protein]-peptidylproline (omega=0). Its function is as follows. Involved in protein export. Acts as a chaperone by maintaining the newly synthesized protein in an open conformation. Functions as a peptidyl-prolyl cis-trans isomerase. The chain is Trigger factor from Bartonella quintana (strain Toulouse) (Rochalimaea quintana).